The primary structure comprises 796 residues: Nuclear GTPase SLIP-GC (796 aa).

Residue 107–114 (GITGAGKS) participates in GTP binding. Coiled-coil stretches lie at residues 158–185 (SDQEWKAELKDLTKLLHRAEQSGEEEAD) and 742–776 (GLCKELADVRNEQKEMEKLYRSLREVAENAQLRRS).

Its subcellular location is the nucleus speckle. In terms of biological role, nuclear GTPase found in germinal center B-cells, where it may inhibit function of the activation-induced cytidine deaminase AICDA. Reduces somatic hypermutation in B-cells which may enhance genome stability. This is Nuclear GTPase SLIP-GC from Mus musculus (Mouse).